Reading from the N-terminus, the 118-residue chain is MLLALALLLAFLPPASQKSSNLEGRTKSVTRPTGSSAVITCDLPVENAVYTHWYLHQEGKAPQRLLYYDSYNSRVVLESGISREKYHTYASTGKSLKFILENLIERDSGVYYCATWDR.

The signal sequence occupies residues 1–17; that stretch reads MLLALALLLAFLPPASQ. Residues 18-118 form the Ig-like domain; sequence KSSNLEGRTK…GVYYCATWDR (101 aa). The cysteines at positions 41 and 113 are disulfide-linked.

Gamma-delta TR is a heterodimer composed of a gamma and delta chain; disulfide-linked. The gamma-delta TR is associated with the transmembrane signaling CD3 coreceptor proteins following the stoichiometry: a single gamma-delta TR heterodimer associates with one CD3D-CD3E heterodimer, one CD3G-CD3E heterodimer and one CD247 homodimer forming a stable octameric structure. Upon activation, gamma-delta TR complex associates with FCER1G to initiate intracellular signaling.

The protein resides in the cell membrane. Functionally, v region of the variable domain of T cell receptor (TR) gamma chain that participates in the antigen recognition. Gamma-delta TRs recognize a variety of self and foreign non-peptide antigens frequently expressed at the epithelial boundaries between the host and external environment, including endogenous lipids presented by MH-like protein CD1D and phosphoantigens presented by butyrophilin-like molecule BTN3A1. Upon antigen recognition induces rapid, innate-like immune responses involved in pathogen clearance and tissue repair. Binding of gamma-delta TR complex to antigen triggers phosphorylation of immunoreceptor tyrosine-based activation motifs (ITAMs) in the CD3 chains by the LCK and FYN kinases, allowing the recruitment, phosphorylation, and activation of ZAP70 that facilitates phosphorylation of the scaffolding proteins LCP2 and LAT. This lead to the formation of a supramolecular signalosome that recruits the phospholipase PLCG1, resulting in calcium mobilization and ERK activation, ultimately leading to T cell expansion and differentiation into effector cells. Gamma-delta TRs are produced through somatic rearrangement of a limited repertoire of variable (V), diversity (D), and joining (J) genes. The potential diversity of gamma-delta TRs is conferred by the unique ability to rearrange (D) genes in tandem and to utilize all three reading frames. The combinatorial diversity is considerably increased by the sequence exonuclease trimming and random nucleotide (N) region additions which occur during the V-(D)-J rearrangements. The protein is T cell receptor gamma variable 8 of Homo sapiens (Human).